The primary structure comprises 540 residues: uncharacterized protein (540 aa).

The N-terminal 58 residues, 1 to 58 (MAVSAFRGTRLPLFHHSQFPVARTVSGTSKKMIGARNFKGFVLTAQYSQTQDLFTSRL), are a transit peptide targeting the chloroplast. A Protein kinase domain is found at 195 to 533 (YVDPTPIASA…ISIASNKRTN (339 aa)). ATP is bound by residues 201 to 209 (IASASIAQV) and Lys224. Asp362 acts as the Proton acceptor in catalysis.

Belongs to the protein kinase superfamily. ADCK protein kinase family.

The protein localises to the plastid. It is found in the chloroplast. Its subcellular location is the plastoglobule. This is an uncharacterized protein from Arabidopsis thaliana (Mouse-ear cress).